A 169-amino-acid chain; its full sequence is UPF0725 protein At2g19200 (169 aa).

The protein belongs to the UPF0725 (EMB2204) family.

The sequence is that of UPF0725 protein At2g19200 from Arabidopsis thaliana (Mouse-ear cress).